The primary structure comprises 542 residues: MFSLQKKALQHIYMTPENASQLTKDLLQHLGLYWNGPVIKMDTVVHLHNKIFSNRSVLKYALAKQANITIIKTLVLWVEPEYALAQALKHNRKDVLECIFSYHLTTPKYHHIMHLTSSQELFEFFHLFICKSKNYNARMECLLYAATLYNFPNILEKNREYIIRHSIGNTLFAIACKERHIHLIAWFVTAGVLDTYDDSTLFNTAFRLGDYSLLEVACDLPIIYPDYLIISMMQTAIQKNYFRFFKKLLTHFNIYRQIIITDAAYYNRRKILLLLLNQNVFNNFAILCALSAAIKGHASKKTLNLLISQLDSQMTVIDSVYYSIIKYNNIDCIPLLMQIKTFRLETLVSIAVHGDNIDIIAACKAFLPKDTLYHLVLKMAIISRNHKLFKLYTEKENPMYIFTTIKAIISNLVNYTVVQAVAIEYLREFHREKQLPIVPLLMVLAEHNYITKFKKACYAANMSDQKVKRALIKCLFIASQKNYCQIFKYCFGSLLKVLSKHERVKFFNSVVFAKKLASYYDHQNMIHLIDSLIERFRYLIKD.

It belongs to the asfivirus MGF 505 family.

Its function is as follows. Plays a role in virus cell tropism, and may be required for efficient virus replication in macrophages. This Ornithodoros (relapsing fever ticks) protein is Protein MGF 505-11L.